The chain runs to 144 residues: Large ribosomal subunit protein uL15 (144 aa).

The tract at residues Met-1–Gly-53 is disordered. Residues Arg-21–Gly-31 are compositionally biased toward gly residues.

The protein belongs to the universal ribosomal protein uL15 family. In terms of assembly, part of the 50S ribosomal subunit.

Its function is as follows. Binds to the 23S rRNA. This is Large ribosomal subunit protein uL15 from Proteus mirabilis (strain HI4320).